A 713-amino-acid polypeptide reads, in one-letter code: Nucleoporin NUP82 (713 aa).

Residues 1–409 form an interaction with NUP116 region; the sequence is MSQSSRLSAL…SDLNPLAGLK (409 aa). Positions 463 to 713 are interaction with NSP1 and NUP159; sequence TSISTEKSDT…VSQEFTTKTQ (251 aa). Residues 582-713 are a coiled coil; it reads EAQNKKWDAQ…VSQEFTTKTQ (132 aa). The Bipartite nuclear localization signal signature appears at 607–623; that stretch reads KKLSQIAESNKFKEKKI.

As to quaternary structure, component of the nuclear pore complex (NPC). NPC constitutes the exclusive means of nucleocytoplasmic transport. NPCs allow the passive diffusion of ions and small molecules and the active, nuclear transport receptor-mediated bidirectional transport of macromolecules such as proteins, RNAs, ribonucleoparticles (RNPs), and ribosomal subunits across the nuclear envelope. Due to its 8-fold rotational symmetry, all subunits are present with 8 copies or multiples thereof. NUP82 is part of the NUP82 subcomplex. This subcomplex is the base for interactions with NUP116 and GLE2, with NUP42 and GLE1 and with DYN2.

The protein resides in the nucleus. It localises to the nuclear pore complex. The protein localises to the nucleus membrane. Functionally, functions as a component of the nuclear pore complex (NPC). NPC components, collectively referred to as nucleoporins (NUPs), can play the role of both NPC structural components and of docking or interaction partners for transiently associated nuclear transport factors. It is specifically involved as part of the NUP82-NUP159-NSP1 subcomplex in nuclear mRNA and pre-ribosome export by acting as a linker tethering nucleoporins that are directly involved in nuclear transport to the NPC via its coiled-coil domain. This Saccharomyces cerevisiae (strain ATCC 204508 / S288c) (Baker's yeast) protein is Nucleoporin NUP82 (NUP82).